Reading from the N-terminus, the 196-residue chain is DNA replication complex GINS protein PSF1 (196 aa).

Belongs to the GINS1/PSF1 family. Component of the GINS complex which is a heterotetramer of GINS1, GINS2, GINS3 and GINS4. Forms a stable subcomplex with GINS4. GINS complex interacts with DNA primase in vitro. Component of the CMG helicase complex, a hexameric ring of related MCM2-7 subunits stabilized by CDC45 and the tetrameric GINS complex.

The protein localises to the nucleus. It is found in the chromosome. Its function is as follows. Required for correct functioning of the GINS complex, a complex that plays an essential role in the initiation of DNA replication, and progression of DNA replication forks. GINS complex is a core component of CDC45-MCM-GINS (CMG) helicase, the molecular machine that unwinds template DNA during replication, and around which the replisome is built. In Mus musculus (Mouse), this protein is DNA replication complex GINS protein PSF1 (Gins1).